Reading from the N-terminus, the 105-residue chain is Sulfite reductase, dissimilatory-type subunit gamma (105 aa).

Belongs to the DsrC/TusE family. Heterohexamer of two alpha, two beta and two gamma subunits.

The protein resides in the cytoplasm. It carries out the reaction [DsrC protein]-trisulfide + NAD(+) + 3 H2O = [DsrC protein]-dithiol + sulfite + NADH + 3 H(+). Catalyzes the reduction of sulfite to sulfide. This is the terminal oxidation reaction in sulfate respiration, a process catalyzed by the sulfate-reducing bacteria. In Nitratidesulfovibrio vulgaris (strain ATCC 29579 / DSM 644 / CCUG 34227 / NCIMB 8303 / VKM B-1760 / Hildenborough) (Desulfovibrio vulgaris), this protein is Sulfite reductase, dissimilatory-type subunit gamma (dsvC).